Consider the following 436-residue polypeptide: Elongation factor 1-gamma-A (436 aa).

Residues 2 to 87 (AGGTLYTYPD…YVGNDELRGT (86 aa)) form the GST N-terminal domain. Positions 88–221 (TRLHQAQVIQ…KMAQFDAKKF (134 aa)) constitute a GST C-terminal domain. Composition is skewed to basic and acidic residues over residues 221–249 (FAEMQPKKETPKKEKPAKEPKKEKEEKKK) and 265–278 (SEKALAAEPKSKDP). Residues 221–278 (FAEMQPKKETPKKEKPAKEPKKEKEEKKKAAPTPAPAPEDDLDESEKALAAEPKSKDP) form a disordered region. An EF-1-gamma C-terminal domain is found at 275–436 (SKDPYAHLPK…KPFNQGKIFK (162 aa)).

In terms of assembly, EF-1 is composed of four subunits: alpha, beta, delta, and gamma. In terms of processing, phosphorylated by CDK1. The N-terminus is blocked.

In terms of biological role, probably plays a role in anchoring the complex to other cellular components. This is Elongation factor 1-gamma-A (eef1g-a) from Xenopus laevis (African clawed frog).